Consider the following 858-residue polypeptide: Large structural phosphoprotein (858 aa).

The tract at residues 603–629 (DVSRGGKGNSRDLYSGGNAEKKETSGK) is disordered.

It belongs to the herpesviridae large structural phosphoprotein family. Homotetramer. Interacts with the major capsid protein. 180 tegument protein pU11 tetramers bind to the virion capsid. In terms of processing, phosphorylated at multiple sites.

Its subcellular location is the virion tegument. This chain is Large structural phosphoprotein (U11), found in Homo sapiens (Human).